The sequence spans 634 residues: Putative ABC transporter ATP-binding protein MG015 homolog (634 aa).

Helical transmembrane passes span 54–74, 111–131, 189–209, 213–233, 296–316, and 325–345; these read VLYVMVCAIFGILTGVTNSIL, LTIVCVTVVVAYILIFSFNVA, VGGQTIQSLFILMTTATILFV, VIALISLTVLIALIALSFLFL, VFIYSWFGFISNITYLASISI, and IPSFGVSAINYSFMLSYIAAL. The region spanning 54 to 364 is the ABC transmembrane type-1 domain; the sequence is VLYVMVCAIF…IFSLWNLIQL (311 aa). One can recognise an ABC transporter domain in the interval 397–631; that stretch reads IRFEKVVFGY…NGFYARLKRS (235 aa). 430–437 contacts ATP; it reads GPTGAGKS.

It belongs to the ABC transporter superfamily.

It is found in the cell membrane. The sequence is that of Putative ABC transporter ATP-binding protein MG015 homolog from Mycoplasma pneumoniae (strain ATCC 29342 / M129 / Subtype 1) (Mycoplasmoides pneumoniae).